The following is a 709-amino-acid chain: Phosphoribosylformylglycinamidine synthase subunit PurL (709 aa).

H36 is a catalytic residue. 2 residues coordinate ATP: Y39 and K80. A Mg(2+)-binding site is contributed by E82. Substrate is bound by residues 83–86 (SHNH) and R105. H84 acts as the Proton acceptor in catalysis. Position 106 (D106) interacts with Mg(2+). Q226 is a binding site for substrate. D252 lines the Mg(2+) pocket. A substrate-binding site is contributed by 294–296 (ETQ). ATP is bound by residues D470 and G507. Substrate is bound at residue S510.

Belongs to the FGAMS family. As to quaternary structure, monomer. Part of the FGAM synthase complex composed of 1 PurL, 1 PurQ and 2 PurS subunits.

The protein localises to the cytoplasm. It catalyses the reaction N(2)-formyl-N(1)-(5-phospho-beta-D-ribosyl)glycinamide + L-glutamine + ATP + H2O = 2-formamido-N(1)-(5-O-phospho-beta-D-ribosyl)acetamidine + L-glutamate + ADP + phosphate + H(+). It functions in the pathway purine metabolism; IMP biosynthesis via de novo pathway; 5-amino-1-(5-phospho-D-ribosyl)imidazole from N(2)-formyl-N(1)-(5-phospho-D-ribosyl)glycinamide: step 1/2. Its function is as follows. Part of the phosphoribosylformylglycinamidine synthase complex involved in the purines biosynthetic pathway. Catalyzes the ATP-dependent conversion of formylglycinamide ribonucleotide (FGAR) and glutamine to yield formylglycinamidine ribonucleotide (FGAM) and glutamate. The FGAM synthase complex is composed of three subunits. PurQ produces an ammonia molecule by converting glutamine to glutamate. PurL transfers the ammonia molecule to FGAR to form FGAM in an ATP-dependent manner. PurS interacts with PurQ and PurL and is thought to assist in the transfer of the ammonia molecule from PurQ to PurL. In Saccharolobus islandicus (strain M.16.27) (Sulfolobus islandicus), this protein is Phosphoribosylformylglycinamidine synthase subunit PurL.